The primary structure comprises 674 residues: Transcription activator of gluconeogenesis PMAA_028970 (674 aa).

Residues 1 to 46 (MMDTDKDDLPSATDHSEHESGDAVKVEGGASKTASNSKDPSRPRRK) are disordered. The span at 14–25 (DHSEHESGDAVK) shows a compositional bias: basic and acidic residues. Residues 52-80 (CFACQRAHLTCGDERPCQRCIKRGLQDAC) constitute a DNA-binding region (zn(2)-C6 fungal-type). 4 disordered regions span residues 117–181 (ISPT…ATPA), 250–321 (TGAG…SGLY), 344–374 (IGSN…SPMK), and 519–557 (NLNV…PGPN). The segment covering 120–148 (TEYTQNGTNNAQQQQQKSGTIYASSTPSY) has biased composition (polar residues). Low complexity predominate over residues 149–163 (NNNNGTFDTNNATNT). Composition is skewed to polar residues over residues 269-278 (GQRSNSQQFG) and 285-294 (TTESPSQQSF). Composition is skewed to low complexity over residues 348-366 (TFAS…IAPS) and 529-540 (NTSSQSDSTSSS).

The protein belongs to the ERT1/acuK family.

It localises to the nucleus. Its function is as follows. Transcription factor which regulates nonfermentable carbon utilization. Activator of gluconeogenetic genes. In Talaromyces marneffei (strain ATCC 18224 / CBS 334.59 / QM 7333) (Penicillium marneffei), this protein is Transcription activator of gluconeogenesis PMAA_028970.